Consider the following 250-residue polypeptide: L-ascorbate peroxidase, cytosolic (250 aa).

The active-site Proton acceptor is the H42. The interval 113-137 (VPFHPGREDKPEPPPEGRLPDATKG) is disordered. Basic and acidic residues predominate over residues 117 to 137 (PGREDKPEPPPEGRLPDATKG). H163 serves as a coordination point for heme b. 5 residues coordinate K(+): T164, T180, N182, I185, and D187.

Belongs to the peroxidase family. Ascorbate peroxidase subfamily. Heme b serves as cofactor.

Its subcellular location is the cytoplasm. The catalysed reaction is L-ascorbate + H2O2 = L-dehydroascorbate + 2 H2O. Functionally, plays a key role in hydrogen peroxide removal. The polypeptide is L-ascorbate peroxidase, cytosolic (APX1) (Pisum sativum (Garden pea)).